Reading from the N-terminus, the 132-residue chain is Large ribosomal subunit protein bL17 (132 aa).

Belongs to the bacterial ribosomal protein bL17 family. Part of the 50S ribosomal subunit. Contacts protein L32.

The sequence is that of Large ribosomal subunit protein bL17 from Ehrlichia canis (strain Jake).